The primary structure comprises 198 residues: Penicillin-binding protein activator LpoB (198 aa).

The N-terminal stretch at 1–20 is a signal peptide; the sequence is MSWIRIRRSGVLLLALVLSG. A lipid anchor (N-palmitoyl cysteine) is attached at Cys21. A lipid anchor (S-diacylglycerol cysteine) is attached at Cys21. The tract at residues 28-62 is disordered; sequence PQPAAPVEPVTPPVNVPQPPKAEPGQNVPPPPKMQ. Residues 30-61 show a composition bias toward pro residues; it reads PAAPVEPVTPPVNVPQPPKAEPGQNVPPPPKM.

Belongs to the LpoB family. Interacts with PBP1b.

It localises to the cell outer membrane. Regulator of peptidoglycan synthesis that is essential for the function of penicillin-binding protein 1B (PBP1b). The chain is Penicillin-binding protein activator LpoB from Erwinia amylovora (strain CFBP1430).